Reading from the N-terminus, the 83-residue chain is Small ribosomal subunit protein bS20 (83 aa).

This sequence belongs to the bacterial ribosomal protein bS20 family.

Functionally, binds directly to 16S ribosomal RNA. This Amoebophilus asiaticus (strain 5a2) protein is Small ribosomal subunit protein bS20.